The following is a 97-amino-acid chain: Peptide Y (97 aa).

The N-terminal stretch at 1-28 is a signal peptide; it reads MANMLRSWMMLAALAVCLLVCLSSFADA. Tyrosine 64 carries the post-translational modification Tyrosine amide. Positions 68–97 are cleaved as a propeptide — C-terminal extension; sequence STPEQAVAWLLFGADSSQDAEPRLDYSDQW.

It belongs to the NPY family.

The protein resides in the secreted. The protein is Peptide Y of Dicentrarchus labrax (European seabass).